Consider the following 222-residue polypeptide: Ribosome maturation factor RimM (222 aa).

The tract at residues 1–22 (MTERKQGAARPLNRPLVQPQGE) is disordered. A PRC barrel domain is found at 145–222 (EDEFYWVDLI…RIVVDWGLDY (78 aa)).

This sequence belongs to the RimM family. Binds ribosomal protein uS19.

Its subcellular location is the cytoplasm. In terms of biological role, an accessory protein needed during the final step in the assembly of 30S ribosomal subunit, possibly for assembly of the head region. Essential for efficient processing of 16S rRNA. May be needed both before and after RbfA during the maturation of 16S rRNA. It has affinity for free ribosomal 30S subunits but not for 70S ribosomes. This chain is Ribosome maturation factor RimM, found in Cupriavidus necator (strain ATCC 17699 / DSM 428 / KCTC 22496 / NCIMB 10442 / H16 / Stanier 337) (Ralstonia eutropha).